A 336-amino-acid chain; its full sequence is 4-hydroxy-3-methylbut-2-enyl diphosphate reductase (336 aa).

C21 provides a ligand contact to [4Fe-4S] cluster. The (2E)-4-hydroxy-3-methylbut-2-enyl diphosphate site is built by H50 and H86. H50 and H86 together coordinate dimethylallyl diphosphate. 2 residues coordinate isopentenyl diphosphate: H50 and H86. Position 108 (C108) interacts with [4Fe-4S] cluster. H136 serves as a coordination point for (2E)-4-hydroxy-3-methylbut-2-enyl diphosphate. Residue H136 participates in dimethylallyl diphosphate binding. H136 contacts isopentenyl diphosphate. The active-site Proton donor is E138. T177 is a binding site for (2E)-4-hydroxy-3-methylbut-2-enyl diphosphate. A [4Fe-4S] cluster-binding site is contributed by C207. Residues S235, S236, N237, and S280 each coordinate (2E)-4-hydroxy-3-methylbut-2-enyl diphosphate. Residues S235, S236, N237, and S280 each contribute to the dimethylallyl diphosphate site. Residues S235, S236, N237, and S280 each contribute to the isopentenyl diphosphate site.

This sequence belongs to the IspH family. Requires [4Fe-4S] cluster as cofactor.

It catalyses the reaction isopentenyl diphosphate + 2 oxidized [2Fe-2S]-[ferredoxin] + H2O = (2E)-4-hydroxy-3-methylbut-2-enyl diphosphate + 2 reduced [2Fe-2S]-[ferredoxin] + 2 H(+). The enzyme catalyses dimethylallyl diphosphate + 2 oxidized [2Fe-2S]-[ferredoxin] + H2O = (2E)-4-hydroxy-3-methylbut-2-enyl diphosphate + 2 reduced [2Fe-2S]-[ferredoxin] + 2 H(+). Its pathway is isoprenoid biosynthesis; dimethylallyl diphosphate biosynthesis; dimethylallyl diphosphate from (2E)-4-hydroxy-3-methylbutenyl diphosphate: step 1/1. It participates in isoprenoid biosynthesis; isopentenyl diphosphate biosynthesis via DXP pathway; isopentenyl diphosphate from 1-deoxy-D-xylulose 5-phosphate: step 6/6. In terms of biological role, catalyzes the conversion of 1-hydroxy-2-methyl-2-(E)-butenyl 4-diphosphate (HMBPP) into a mixture of isopentenyl diphosphate (IPP) and dimethylallyl diphosphate (DMAPP). Acts in the terminal step of the DOXP/MEP pathway for isoprenoid precursor biosynthesis. This chain is 4-hydroxy-3-methylbut-2-enyl diphosphate reductase, found in Mesorhizobium japonicum (strain LMG 29417 / CECT 9101 / MAFF 303099) (Mesorhizobium loti (strain MAFF 303099)).